The sequence spans 100 residues: Small ribosomal subunit protein uS14 (100 aa).

The protein belongs to the universal ribosomal protein uS14 family. Part of the 30S ribosomal subunit. Contacts proteins S3 and S10.

In terms of biological role, binds 16S rRNA, required for the assembly of 30S particles and may also be responsible for determining the conformation of the 16S rRNA at the A site. This is Small ribosomal subunit protein uS14 from Trichormus variabilis (strain ATCC 29413 / PCC 7937) (Anabaena variabilis).